The following is a 123-amino-acid chain: Large ribosomal subunit protein bL12 (123 aa).

This sequence belongs to the bacterial ribosomal protein bL12 family. Homodimer. Part of the ribosomal stalk of the 50S ribosomal subunit. Forms a multimeric L10(L12)X complex, where L10 forms an elongated spine to which 2 to 4 L12 dimers bind in a sequential fashion. Binds GTP-bound translation factors.

Functionally, forms part of the ribosomal stalk which helps the ribosome interact with GTP-bound translation factors. Is thus essential for accurate translation. The sequence is that of Large ribosomal subunit protein bL12 from Rickettsia bellii (strain OSU 85-389).